The following is a 316-amino-acid chain: Aquaglyceroporin-2 (316 aa).

Positions 1 to 31 (MADERGPINKSGPSSTYGATENNGESGGTRG) are disordered. Over 1 to 59 (MADERGPINKSGPSSTYGATENNGESGGTRGAPATEDVIVIQDSGWYYIKFRFKEPFAE) the chain is Cytoplasmic. The segment covering 11–24 (SGPSSTYGATENNG) has biased composition (polar residues). Residues 60 to 80 (FLGTFILVAFGVGAIAQTVLS) form a helical membrane-spanning segment. Residues 81-86 (KGATGN) lie on the Extracellular side of the membrane. Residues 87–107 (WITIALGFGLGLALGIAVSGH) form a helical membrane-spanning segment. The Cytoplasmic portion of the chain corresponds to 108 to 131 (YSGGHLNPAVTITLAIYRKFPWVK). An NPA 1 motif is present at residues 114–116 (NPA). Residues 132–152 (VPVYITAQVLGAFVAAAVIYL) form a helical membrane-spanning segment. Residues 153–187 (NYLPAIYNFAGDKRDVIGANATAGIFATYPQPFMS) are Extracellular-facing. Asparagine 172 is a glycosylation site (N-linked (GlcNAc...) asparagine). The chain crosses the membrane as a helical span at residues 188–208 (IGGAFFSEALGTFFLLFVILA). Residues 209 to 219 (MTDERNVPTTR) lie on the Cytoplasmic side of the membrane. A helical membrane pass occupies residues 220 to 240 (IVAPITIGLTLTAIAISLGFE). The Extracellular portion of the chain corresponds to 241 to 271 (TGFSLNAARDFGPRLFTFFIGYGVEVFTAYK). Positions 246–248 (NAA) match the NPA 2 motif. The helical transmembrane segment at 272 to 292 (FYFWIPLVAPIVGGLVAGFVY) threads the bilayer. Over 293 to 316 (DSLLYWGEKSFLNKNVHHEHRAVA) the chain is Cytoplasmic.

Belongs to the MIP/aquaporin (TC 1.A.8) family.

The protein localises to the cell membrane. It localises to the membrane. It carries out the reaction H2O(in) = H2O(out). The catalysed reaction is glycerol(in) = glycerol(out). With respect to regulation, polyethylene glycol (PEG) stimulates whereas glycerol inhibits the aquaporin activity. Water channel required to facilitate the transport of water across membranes. Stimulates plant drought tolerance by facilitating the transport of water from the arbuscular mycorrhiza fungus to host plants. The protein is Aquaglyceroporin-2 of Rhizophagus irregularis (Arbuscular mycorrhizal fungus).